The following is a 175-amino-acid chain: Peptide deformylase (175 aa).

The Fe cation site is built by cysteine 99 and histidine 141. Glutamate 142 is a catalytic residue. Histidine 145 contacts Fe cation.

This sequence belongs to the polypeptide deformylase family. The cofactor is Fe(2+).

The enzyme catalyses N-terminal N-formyl-L-methionyl-[peptide] + H2O = N-terminal L-methionyl-[peptide] + formate. Functionally, removes the formyl group from the N-terminal Met of newly synthesized proteins. Requires at least a dipeptide for an efficient rate of reaction. N-terminal L-methionine is a prerequisite for activity but the enzyme has broad specificity at other positions. The polypeptide is Peptide deformylase (Rickettsia akari (strain Hartford)).